A 143-amino-acid polypeptide reads, in one-letter code: MTDNLPEVREAQEWFRSETRRVAPITLDVMWDHFLSRHWSQLSPDFPLQEFVCYAREQVMTILPDSPPRFINLNNYLWSEQWLVRYRDMDFIQNVLNGMASRRPRLDALRDSWYDLDAHYDALETRFWQFYPRMMAQASHKAL.

It belongs to the AcpH family.

The catalysed reaction is holo-[ACP] + H2O = apo-[ACP] + (R)-4'-phosphopantetheine + H(+). In terms of biological role, converts holo-ACP to apo-ACP by hydrolytic cleavage of the phosphopantetheine prosthetic group from ACP. The polypeptide is Putative acyl carrier protein phosphodiesterase (acpH) (Shigella flexneri).